The following is a 356-amino-acid chain: Malate dehydrogenase, glyoxysomal (356 aa).

Residues 1–36 (MEDAAAAARRMERLASHLRPPASQMEESPLLRGSNC) constitute a glyoxysome transit peptide. Residues 51 to 57 (GASGGIG) and Asp-77 each bind NAD(+). Substrate is bound by residues Arg-124 and Arg-130. NAD(+) contacts are provided by residues Asn-137 and 160–162 (ISN). The substrate site is built by Asn-162 and Arg-196. Catalysis depends on His-220, which acts as the Proton acceptor. Position 271 (Met-271) interacts with NAD(+).

It belongs to the LDH/MDH superfamily. MDH type 1 family. Homodimer.

The protein localises to the glyoxysome. It catalyses the reaction (S)-malate + NAD(+) = oxaloacetate + NADH + H(+). This Oryza sativa subsp. japonica (Rice) protein is Malate dehydrogenase, glyoxysomal.